The primary structure comprises 505 residues: RNA-splicing ligase RtcB homolog (505 aa).

Residues aspartate 119, cysteine 122, histidine 227, histidine 259, and histidine 353 each coordinate Mn(2+). Asparagine 226–glutamate 230 lines the GMP pocket. Residues histidine 353 to asparagine 354, glycine 402 to methionine 405, serine 409, histidine 428 to glycine 431, and lysine 504 each bind GMP. Histidine 428 functions as the GMP-histidine intermediate in the catalytic mechanism.

This sequence belongs to the RtcB family. As to quaternary structure, catalytic component of the tRNA-splicing ligase complex. The cofactor is Mn(2+).

It carries out the reaction a 3'-end 3'-phospho-ribonucleotide-RNA + a 5'-end dephospho-ribonucleoside-RNA + GTP = a ribonucleotidyl-ribonucleotide-RNA + GMP + diphosphate. The enzyme catalyses a 3'-end 2',3'-cyclophospho-ribonucleotide-RNA + a 5'-end dephospho-ribonucleoside-RNA + GTP + H2O = a ribonucleotidyl-ribonucleotide-RNA + GMP + diphosphate + H(+). Catalytic subunit of the tRNA-splicing ligase complex that acts by directly joining spliced tRNA halves to mature-sized tRNAs by incorporating the precursor-derived splice junction phosphate into the mature tRNA as a canonical 3',5'-phosphodiester. May act as an RNA ligase with broad substrate specificity, and may function toward other RNAs. The chain is RNA-splicing ligase RtcB homolog from Brugia malayi (Filarial nematode worm).